A 242-amino-acid chain; its full sequence is Small ribosomal subunit protein uS2 (242 aa).

It belongs to the universal ribosomal protein uS2 family.

This is Small ribosomal subunit protein uS2 from Aeromonas salmonicida (strain A449).